A 153-amino-acid chain; its full sequence is Superoxide dismutase [Cu-Zn] (153 aa).

Residues histidine 45, histidine 47, and histidine 62 each coordinate Cu cation. Cysteine 56 and cysteine 145 are joined by a disulfide. Residues histidine 62, histidine 70, histidine 79, and aspartate 82 each contribute to the Zn(2+) site. Histidine 119 is a binding site for Cu cation.

This sequence belongs to the Cu-Zn superoxide dismutase family. As to quaternary structure, homodimer. The cofactor is Cu cation. Zn(2+) serves as cofactor.

It localises to the cytoplasm. The enzyme catalyses 2 superoxide + 2 H(+) = H2O2 + O2. Destroys radicals which are normally produced within the cells and which are toxic to biological systems. The protein is Superoxide dismutase [Cu-Zn] of Drosophila virilis (Fruit fly).